Here is a 230-residue protein sequence, read N- to C-terminus: Type II restriction enzyme MjaV (230 aa).

The catalysed reaction is Endonucleolytic cleavage of DNA to give specific double-stranded fragments with terminal 5'-phosphates.. A P subtype restriction enzyme that recognizes the double-stranded sequence 5'-GTAC-3'; the cleavage site is unknown. In Methanocaldococcus jannaschii (strain ATCC 43067 / DSM 2661 / JAL-1 / JCM 10045 / NBRC 100440) (Methanococcus jannaschii), this protein is Type II restriction enzyme MjaV (mjaVR).